The chain runs to 628 residues: UvrABC system protein C (628 aa).

Positions 20–99 (TSAGVYLMRD…IKTHKPRYNV (80 aa)) constitute a GIY-YIG domain. Positions 209–244 (AELLAQLEDQMQTAAAAMNFEHAARLRDRITGLNQL) constitute a UVR domain.

Belongs to the UvrC family. In terms of assembly, interacts with UvrB in an incision complex.

The protein localises to the cytoplasm. Its function is as follows. The UvrABC repair system catalyzes the recognition and processing of DNA lesions. UvrC both incises the 5' and 3' sides of the lesion. The N-terminal half is responsible for the 3' incision and the C-terminal half is responsible for the 5' incision. The chain is UvrABC system protein C from Gloeobacter violaceus (strain ATCC 29082 / PCC 7421).